The primary structure comprises 196 residues: NAD(P)H-quinone oxidoreductase subunit I (196 aa).

4Fe-4S ferredoxin-type domains are found at residues 54-83 (GRIHFEFDKCIACEVCVRVCPINLPVVDWV) and 94-123 (KHYSIDFGVCIFCANCVEYCPTNCLSVTEE). Residues Cys-63, Cys-66, Cys-69, Cys-73, Cys-103, Cys-106, Cys-109, and Cys-113 each contribute to the [4Fe-4S] cluster site. The interval 174–196 (PAGAQRAGERPEAIANTAKSSEN) is disordered.

It belongs to the complex I 23 kDa subunit family. As to quaternary structure, NDH-1 is composed of at least 11 different subunits. Requires [4Fe-4S] cluster as cofactor.

It is found in the cellular thylakoid membrane. It catalyses the reaction a plastoquinone + NADH + (n+1) H(+)(in) = a plastoquinol + NAD(+) + n H(+)(out). The catalysed reaction is a plastoquinone + NADPH + (n+1) H(+)(in) = a plastoquinol + NADP(+) + n H(+)(out). Functionally, NDH-1 shuttles electrons from an unknown electron donor, via FMN and iron-sulfur (Fe-S) centers, to quinones in the respiratory and/or the photosynthetic chain. The immediate electron acceptor for the enzyme in this species is believed to be plastoquinone. Couples the redox reaction to proton translocation, and thus conserves the redox energy in a proton gradient. The sequence is that of NAD(P)H-quinone oxidoreductase subunit I from Thermosynechococcus vestitus (strain NIES-2133 / IAM M-273 / BP-1).